The sequence spans 875 residues: Probable serine/threonine-protein kinase samkC (875 aa).

A compositionally biased stretch (polar residues) spans 1-12 (METTTITSILDD). The disordered stretch occupies residues 1–47 (METTTITSILDDNNNNNNNNNNNNNNNNNNNNNNNNNNNNNNNNNYN). Low complexity predominate over residues 13–45 (NNNNNNNNNNNNNNNNNNNNNNNNNNNNNNNNN). In terms of domain architecture, SAM spans 51–116 (WDNEMVCKWL…SEFDDLKNIF (66 aa)). Residues 135–162 (DNNNLNNLNNNNNNNNNNNNNNNNNNNN) are a coiled coil. Low complexity predominate over residues 136-168 (NNNLNNLNNNNNNNNNNNNNNNNNNNNNNNNNN). Residues 136–170 (NNNLNNLNNNNNNNNNNNNNNNNNNNNNNNNNNKT) are disordered. The region spanning 181-452 (YVFIKQMKGS…SKQLLNFSWF (272 aa)) is the Protein kinase domain. ATP is bound by residues 187 to 195 (MKGSVNCSL) and lysine 210. Aspartate 301 acts as the Proton acceptor in catalysis. Disordered stretches follow at residues 331-362 (NNND…NDTN) and 461-718 (SEPQ…NNNN). Over residues 474-554 (PQTSQSKPKP…KPKPSSSLSS (81 aa)) the composition is skewed to low complexity. Over residues 555-564 (EPPPLEPQPK) the composition is skewed to pro residues. Composition is skewed to low complexity over residues 565–581 (PQTS…LSSS), 589–611 (QPTQ…SQPT), and 617–653 (QPKS…QQQK). Positions 626-655 (QSKQQQQQQQQQQQQQQQQQQQQQQQQKSK) form a coiled coil. Residues 654–663 (SKPEQSKSKP) are compositionally biased toward basic and acidic residues. The segment covering 664–718 (EQSQSKPQPGQPLQSPSKPQPIPSTTKTTTTTTTTTTPNNNNNNNNNNNNNNNNN) has biased composition (low complexity). Residues 842 to 862 (TLILYTFYYFLSNTLIYQIIL) traverse the membrane as a helical segment.

This sequence belongs to the protein kinase superfamily. Ser/Thr protein kinase family.

The protein resides in the membrane. The catalysed reaction is L-seryl-[protein] + ATP = O-phospho-L-seryl-[protein] + ADP + H(+). It catalyses the reaction L-threonyl-[protein] + ATP = O-phospho-L-threonyl-[protein] + ADP + H(+). The sequence is that of Probable serine/threonine-protein kinase samkC (samkC) from Dictyostelium discoideum (Social amoeba).